The following is a 247-amino-acid chain: DNA polymerase sliding clamp (247 aa).

It belongs to the PCNA family. Homotrimer. The subunits circularize to form a toroid; DNA passes through its center. Replication factor C (RFC) is required to load the toroid on the DNA.

Its function is as follows. Sliding clamp subunit that acts as a moving platform for DNA processing. Responsible for tethering the catalytic subunit of DNA polymerase and other proteins to DNA during high-speed replication. This Thermofilum pendens (strain DSM 2475 / Hrk 5) protein is DNA polymerase sliding clamp.